Here is a 199-residue protein sequence, read N- to C-terminus: Early activation antigen CD69 (199 aa).

The segment at 1–29 (MSSENCFVAENSSLHPESGQENDATSPHF) is disordered. At 1 to 40 (MSSENCFVAENSSLHPESGQENDATSPHFSTRHEGSFQVP) the chain is on the cytoplasmic side. Residues 41–61 (VLCAVMNVVFITILIIALIAL) form a helical; Signal-anchor for type II membrane protein membrane-spanning segment. Residues 62-199 (SVGQYNCPGQ…LYWICNKPYK (138 aa)) lie on the Extracellular side of the membrane. Cystine bridges form between C85–C96, C113–C194, and C173–C186. The region spanning 92–195 (YQRKCYFIST…CEKNLYWICN (104 aa)) is the C-type lectin domain. N166 carries an N-linked (GlcNAc...) asparagine glycan.

In terms of assembly, homodimer; disulfide-linked. Interacts with S100A8 and S100A9. Interacts with galactin-1/LGALS1. Interacts with S1PR1; this interaction mediates S1PR1 degradation. Constitutive Ser/Thr phosphorylation in both mature thymocytes and activated T-lymphocytes. In terms of tissue distribution, expressed on the surface of activated T-cells, B-cells, natural killer cells, neutrophils, eosinophils, epidermal Langerhans cells and platelets.

The protein localises to the cell membrane. Its function is as follows. Transmembrane protein expressed mainly on T-cells resident in mucosa that plays an essential role in immune cell homeostasis. Rapidly expressed on the surface of platelets, T-lymphocytes and NK cells upon activation by various stimuli, such as antigen recognition or cytokine signaling, stimulates different signaling pathways in different cell types. Negatively regulates Th17 cell differentiation through its carbohydrate dependent interaction with galectin-1/LGALS1 present on immature dendritic cells. Association of CD69 cytoplasmic tail with the JAK3/STAT5 signaling pathway regulates the transcription of RORgamma/RORC and, consequently, differentiation toward the Th17 lineage. Also acts via the S100A8/S100A9 complex present on peripheral blood mononuclear cells to promote the conversion of naive CD4 T-cells into regulatory T-cells. Acts as an oxidized low-density lipoprotein (oxLDL) receptor in CD4 T-lymphocytes and negatively regulates the inflammatory response by inducing the expression of PDCD1 through the activation of NFAT. Participates in adipose tissue-derived mesenchymal stem cells (ASCs)-mediated protection against P.aeruginosa infection. Mechanistically, specifically recognizes P.aeruginosa to promote ERK1 activation, followed by granulocyte-macrophage colony-stimulating factor (GM-CSF) and other inflammatory cytokines secretion. In eosinophils, induces IL-10 production through the ERK1/2 pathway. Negatively regulates the chemotactic responses of effector lymphocytes and dendritic cells (DCs) to sphingosine 1 phosphate/S1P by acting as a S1PR1 receptor agonist and facilitating the internalization and degradation of the receptor. This Homo sapiens (Human) protein is Early activation antigen CD69 (CD69).